We begin with the raw amino-acid sequence, 394 residues long: Cysteine desulfurase IscS (394 aa).

Pyridoxal 5'-phosphate is bound by residues 72 to 73, asparagine 152, glutamine 180, and 200 to 202; these read GT and SAH. An N6-(pyridoxal phosphate)lysine modification is found at lysine 203. Pyridoxal 5'-phosphate is bound at residue threonine 238. Cysteine 326 functions as the Cysteine persulfide intermediate in the catalytic mechanism. Cysteine 326 contributes to the [2Fe-2S] cluster binding site.

It belongs to the class-V pyridoxal-phosphate-dependent aminotransferase family. NifS/IscS subfamily. In terms of assembly, homodimer. Forms a heterotetramer with IscU, interacts with other sulfur acceptors. The cofactor is pyridoxal 5'-phosphate.

It is found in the cytoplasm. It catalyses the reaction (sulfur carrier)-H + L-cysteine = (sulfur carrier)-SH + L-alanine. It functions in the pathway cofactor biosynthesis; iron-sulfur cluster biosynthesis. In terms of biological role, master enzyme that delivers sulfur to a number of partners involved in Fe-S cluster assembly, tRNA modification or cofactor biosynthesis. Catalyzes the removal of elemental sulfur atoms from cysteine to produce alanine. Functions as a sulfur delivery protein for Fe-S cluster synthesis onto IscU, an Fe-S scaffold assembly protein, as well as other S acceptor proteins. This Dictyoglomus turgidum (strain DSM 6724 / Z-1310) protein is Cysteine desulfurase IscS.